A 270-amino-acid polypeptide reads, in one-letter code: Small ribosomal subunit protein uS2 (270 aa).

Residues 207–225 (EEPENTEEAAEEAATEEVV) show a composition bias toward acidic residues. The tract at residues 207-270 (EEPENTEEAA…SESAPAPVAA (64 aa)) is disordered. The span at 226-258 (ETAAAEAAAATNADNWDVAPDAGAGAADWAATD) shows a compositional bias: low complexity.

This sequence belongs to the universal ribosomal protein uS2 family. As to quaternary structure, component of the small ribosomal subunit. Mature ribosomes consist of a small (40S) and a large (60S) subunit. The 40S subunit contains about 33 different proteins and 1 molecule of RNA (18S). The 60S subunit contains about 49 different proteins and 3 molecules of RNA (25S, 5.8S and 5S). Interacts with RPS21.

It localises to the cytoplasm. Required for the assembly and/or stability of the 40S ribosomal subunit. Required for the processing of the 20S rRNA-precursor to mature 18S rRNA in a late step of the maturation of 40S ribosomal subunits. The sequence is that of Small ribosomal subunit protein uS2 from Yarrowia lipolytica (strain CLIB 122 / E 150) (Yeast).